A 351-amino-acid polypeptide reads, in one-letter code: DNA polymerase IV (351 aa).

The region spanning 4–185 (IIHIDMDCFY…LPLRKIPGVG (182 aa)) is the UmuC domain. 2 residues coordinate Mg(2+): aspartate 8 and aspartate 103. The active site involves glutamate 104.

Belongs to the DNA polymerase type-Y family. In terms of assembly, monomer. Mg(2+) is required as a cofactor.

Its subcellular location is the cytoplasm. The catalysed reaction is DNA(n) + a 2'-deoxyribonucleoside 5'-triphosphate = DNA(n+1) + diphosphate. Poorly processive, error-prone DNA polymerase involved in untargeted mutagenesis. Copies undamaged DNA at stalled replication forks, which arise in vivo from mismatched or misaligned primer ends. These misaligned primers can be extended by PolIV. Exhibits no 3'-5' exonuclease (proofreading) activity. May be involved in translesional synthesis, in conjunction with the beta clamp from PolIII. This chain is DNA polymerase IV, found in Photorhabdus laumondii subsp. laumondii (strain DSM 15139 / CIP 105565 / TT01) (Photorhabdus luminescens subsp. laumondii).